The sequence spans 239 residues: 7-cyano-7-deazaguanine synthase (239 aa).

Phenylalanine 13–leucine 23 contributes to the ATP binding site. Positions 192, 201, 204, and 207 each coordinate Zn(2+).

It belongs to the QueC family. Requires Zn(2+) as cofactor.

It carries out the reaction 7-carboxy-7-deazaguanine + NH4(+) + ATP = 7-cyano-7-deazaguanine + ADP + phosphate + H2O + H(+). It functions in the pathway purine metabolism; 7-cyano-7-deazaguanine biosynthesis. Its function is as follows. Catalyzes the ATP-dependent conversion of 7-carboxy-7-deazaguanine (CDG) to 7-cyano-7-deazaguanine (preQ(0)). This is 7-cyano-7-deazaguanine synthase from Shewanella sp. (strain MR-7).